A 164-amino-acid chain; its full sequence is Transcriptional repressor NrdR (164 aa).

The segment at 3-34 (CPKCNYHKSSVVDSRQAEDGNTIRRRRECEQC) is a zinc-finger region. Residues 49 to 139 (LLVIKKDGTR…VYKSFKDVDE (91 aa)) form the ATP-cone domain.

The protein belongs to the NrdR family. It depends on Zn(2+) as a cofactor.

Its function is as follows. Negatively regulates transcription of bacterial ribonucleotide reductase nrd genes and operons by binding to NrdR-boxes. The sequence is that of Transcriptional repressor NrdR from Streptococcus pyogenes serotype M6 (strain ATCC BAA-946 / MGAS10394).